A 1343-amino-acid polypeptide reads, in one-letter code: DNA-directed RNA polymerase subunit beta (1343 aa).

The protein belongs to the RNA polymerase beta chain family. As to quaternary structure, the RNAP catalytic core consists of 2 alpha, 1 beta, 1 beta' and 1 omega subunit. When a sigma factor is associated with the core the holoenzyme is formed, which can initiate transcription.

The enzyme catalyses RNA(n) + a ribonucleoside 5'-triphosphate = RNA(n+1) + diphosphate. In terms of biological role, DNA-dependent RNA polymerase catalyzes the transcription of DNA into RNA using the four ribonucleoside triphosphates as substrates. This chain is DNA-directed RNA polymerase subunit beta, found in Shewanella baltica (strain OS155 / ATCC BAA-1091).